Reading from the N-terminus, the 208-residue chain is Thymidylate kinase (208 aa).

7 to 14 (GIDGAGKT) contacts ATP.

Belongs to the thymidylate kinase family.

It catalyses the reaction dTMP + ATP = dTDP + ADP. Phosphorylation of dTMP to form dTDP in both de novo and salvage pathways of dTTP synthesis. This Xylella fastidiosa (strain Temecula1 / ATCC 700964) protein is Thymidylate kinase.